The primary structure comprises 303 residues: Dihydroorotate dehydrogenase B (NAD(+)), catalytic subunit (303 aa).

FMN-binding positions include serine 21 and 45–46 (KG). Substrate contacts are provided by residues lysine 45 and 69 to 73 (NAVGL). The FMN site is built by asparagine 99 and asparagine 127. Asparagine 127 lines the substrate pocket. The active-site Nucleophile is the cysteine 130. FMN contacts are provided by lysine 165 and isoleucine 191. 192 to 193 (NT) contacts substrate. Residues glycine 217, 243-244 (GG), and 265-266 (GT) each bind FMN.

This sequence belongs to the dihydroorotate dehydrogenase family. Type 1 subfamily. As to quaternary structure, heterotetramer of 2 PyrK and 2 PyrD type B subunits. FMN is required as a cofactor.

The protein resides in the cytoplasm. The enzyme catalyses (S)-dihydroorotate + NAD(+) = orotate + NADH + H(+). The protein operates within pyrimidine metabolism; UMP biosynthesis via de novo pathway; orotate from (S)-dihydroorotate (NAD(+) route): step 1/1. In terms of biological role, catalyzes the conversion of dihydroorotate to orotate with NAD(+) as electron acceptor. The protein is Dihydroorotate dehydrogenase B (NAD(+)), catalytic subunit (pyrD) of Bacteroides fragilis (strain ATCC 25285 / DSM 2151 / CCUG 4856 / JCM 11019 / LMG 10263 / NCTC 9343 / Onslow / VPI 2553 / EN-2).